The chain runs to 517 residues: Maturase K (517 aa).

This sequence belongs to the intron maturase 2 family. MatK subfamily.

It is found in the plastid. It localises to the chloroplast. Functionally, usually encoded in the trnK tRNA gene intron. Probably assists in splicing its own and other chloroplast group II introns. The protein is Maturase K of Trillium maculatum (Spotted wakerobin).